Consider the following 110-residue polypeptide: ATP synthase epsilon chain (110 aa).

It belongs to the ATPase epsilon chain family. As to quaternary structure, F-type ATPases have 2 components, CF(1) - the catalytic core - and CF(0) - the membrane proton channel. CF(1) has five subunits: alpha(3), beta(3), gamma(1), delta(1), epsilon(1). CF(0) has three main subunits: a, b and c.

It localises to the cell inner membrane. In terms of biological role, produces ATP from ADP in the presence of a proton gradient across the membrane. The protein is ATP synthase epsilon chain of Rickettsia typhi (strain ATCC VR-144 / Wilmington).